We begin with the raw amino-acid sequence, 451 residues long: Glycosyltransferase-like At2g41451 (451 aa).

Positions 1 to 23 (MASSDSSYSRKFLLITFLPLSLA) are cleaved as a signal peptide. 5 N-linked (GlcNAc...) asparagine glycosylation sites follow: Asn36, Asn137, Asn168, Asn441, and Asn444. The 237-residue stretch at 109 to 345 (QTLPWIFYHK…TYSKFSDLTS (237 aa)) folds into the GT92 domain.

This sequence belongs to the glycosyltransferase 92 family.

The protein localises to the secreted. It localises to the cell wall. It is found in the cytoplasm. The protein resides in the cell membrane. Its function is as follows. Involved in the coordination between cell elongation and cellulose synthesis by promoting the expression of genes involved in cell elongation and cellulose synthesis. Acts as a regulator of plasmodesmatal permeability. Maybe a glycosyltransferase. In Arabidopsis thaliana (Mouse-ear cress), this protein is Glycosyltransferase-like At2g41451.